The following is a 348-amino-acid chain: Methylthioribose-1-phosphate isomerase (348 aa).

Residues 46 to 48 (RGA), arginine 88, and glutamine 194 each bind substrate. Aspartate 235 functions as the Proton donor in the catalytic mechanism. Position 245–246 (245–246 (NK)) interacts with substrate.

It belongs to the eIF-2B alpha/beta/delta subunits family. MtnA subfamily.

The enzyme catalyses 5-(methylsulfanyl)-alpha-D-ribose 1-phosphate = 5-(methylsulfanyl)-D-ribulose 1-phosphate. Its pathway is amino-acid biosynthesis; L-methionine biosynthesis via salvage pathway; L-methionine from S-methyl-5-thio-alpha-D-ribose 1-phosphate: step 1/6. Functionally, catalyzes the interconversion of methylthioribose-1-phosphate (MTR-1-P) into methylthioribulose-1-phosphate (MTRu-1-P). The sequence is that of Methylthioribose-1-phosphate isomerase from Desulforudis audaxviator (strain MP104C).